The sequence spans 509 residues: Aspartyl/glutamyl-tRNA(Asn/Gln) amidotransferase subunit B (509 aa).

This sequence belongs to the GatB/GatE family. GatB subfamily. Heterotrimer of A, B and C subunits.

The catalysed reaction is L-glutamyl-tRNA(Gln) + L-glutamine + ATP + H2O = L-glutaminyl-tRNA(Gln) + L-glutamate + ADP + phosphate + H(+). The enzyme catalyses L-aspartyl-tRNA(Asn) + L-glutamine + ATP + H2O = L-asparaginyl-tRNA(Asn) + L-glutamate + ADP + phosphate + 2 H(+). In terms of biological role, allows the formation of correctly charged Asn-tRNA(Asn) or Gln-tRNA(Gln) through the transamidation of misacylated Asp-tRNA(Asn) or Glu-tRNA(Gln) in organisms which lack either or both of asparaginyl-tRNA or glutaminyl-tRNA synthetases. The reaction takes place in the presence of glutamine and ATP through an activated phospho-Asp-tRNA(Asn) or phospho-Glu-tRNA(Gln). The chain is Aspartyl/glutamyl-tRNA(Asn/Gln) amidotransferase subunit B from Psychrobacter cryohalolentis (strain ATCC BAA-1226 / DSM 17306 / VKM B-2378 / K5).